We begin with the raw amino-acid sequence, 346 residues long: 4-hydroxy-2-oxovalerate aldolase (346 aa).

Residues 8 to 260 (VTLHDMSLRD…ETGIDLYKIM (253 aa)) enclose the Pyruvate carboxyltransferase domain. 16–17 (RD) is a substrate binding site. Asp-17 is a binding site for Mn(2+). Residue His-20 is the Proton acceptor of the active site. Residues Ser-170 and His-199 each contribute to the substrate site. Residues His-199 and His-201 each contribute to the Mn(2+) site. Tyr-290 is a substrate binding site.

This sequence belongs to the 4-hydroxy-2-oxovalerate aldolase family.

The catalysed reaction is (S)-4-hydroxy-2-oxopentanoate = acetaldehyde + pyruvate. The polypeptide is 4-hydroxy-2-oxovalerate aldolase (nahM) (Stutzerimonas stutzeri (Pseudomonas stutzeri)).